A 169-amino-acid chain; its full sequence is Crossover junction endodeoxyribonuclease RuvC (169 aa).

Active-site residues include Asp13, Glu73, and Asp145. Mg(2+) is bound by residues Asp13, Glu73, and Asp145.

This sequence belongs to the RuvC family. As to quaternary structure, homodimer which binds Holliday junction (HJ) DNA. The HJ becomes 2-fold symmetrical on binding to RuvC with unstacked arms; it has a different conformation from HJ DNA in complex with RuvA. In the full resolvosome a probable DNA-RuvA(4)-RuvB(12)-RuvC(2) complex forms which resolves the HJ. The cofactor is Mg(2+).

Its subcellular location is the cytoplasm. It carries out the reaction Endonucleolytic cleavage at a junction such as a reciprocal single-stranded crossover between two homologous DNA duplexes (Holliday junction).. Its function is as follows. The RuvA-RuvB-RuvC complex processes Holliday junction (HJ) DNA during genetic recombination and DNA repair. Endonuclease that resolves HJ intermediates. Cleaves cruciform DNA by making single-stranded nicks across the HJ at symmetrical positions within the homologous arms, yielding a 5'-phosphate and a 3'-hydroxyl group; requires a central core of homology in the junction. The consensus cleavage sequence is 5'-(A/T)TT(C/G)-3'. Cleavage occurs on the 3'-side of the TT dinucleotide at the point of strand exchange. HJ branch migration catalyzed by RuvA-RuvB allows RuvC to scan DNA until it finds its consensus sequence, where it cleaves and resolves the cruciform DNA. The chain is Crossover junction endodeoxyribonuclease RuvC from Solidesulfovibrio magneticus (strain ATCC 700980 / DSM 13731 / RS-1) (Desulfovibrio magneticus).